A 334-amino-acid polypeptide reads, in one-letter code: Anthranilate phosphoribosyltransferase (334 aa).

5-phospho-alpha-D-ribose 1-diphosphate is bound by residues G79, G82 to D83, S87, N89 to T92, K107 to S115, and S119. G79 contributes to the anthranilate binding site. Residue S91 coordinates Mg(2+). N110 contributes to the anthranilate binding site. R165 contacts anthranilate. Residues D224 and E225 each contribute to the Mg(2+) site.

The protein belongs to the anthranilate phosphoribosyltransferase family. In terms of assembly, homodimer. Mg(2+) serves as cofactor.

The enzyme catalyses N-(5-phospho-beta-D-ribosyl)anthranilate + diphosphate = 5-phospho-alpha-D-ribose 1-diphosphate + anthranilate. Its pathway is amino-acid biosynthesis; L-tryptophan biosynthesis; L-tryptophan from chorismate: step 2/5. Its function is as follows. Catalyzes the transfer of the phosphoribosyl group of 5-phosphorylribose-1-pyrophosphate (PRPP) to anthranilate to yield N-(5'-phosphoribosyl)-anthranilate (PRA). This chain is Anthranilate phosphoribosyltransferase, found in Streptococcus thermophilus (strain CNRZ 1066).